The sequence spans 205 residues: Protein-L-isoaspartate O-methyltransferase (205 aa).

The active site involves Ser56.

Belongs to the methyltransferase superfamily. L-isoaspartyl/D-aspartyl protein methyltransferase family.

Its subcellular location is the cytoplasm. The enzyme catalyses [protein]-L-isoaspartate + S-adenosyl-L-methionine = [protein]-L-isoaspartate alpha-methyl ester + S-adenosyl-L-homocysteine. Catalyzes the methyl esterification of L-isoaspartyl residues in peptides and proteins that result from spontaneous decomposition of normal L-aspartyl and L-asparaginyl residues. It plays a role in the repair and/or degradation of damaged proteins. This chain is Protein-L-isoaspartate O-methyltransferase, found in Aeromonas salmonicida (strain A449).